A 284-amino-acid chain; its full sequence is Bifunctional protein FolD (284 aa).

Residues 164–166 and Ser189 each bind NADP(+); that span reads GRS.

The protein belongs to the tetrahydrofolate dehydrogenase/cyclohydrolase family. As to quaternary structure, homodimer.

It carries out the reaction (6R)-5,10-methylene-5,6,7,8-tetrahydrofolate + NADP(+) = (6R)-5,10-methenyltetrahydrofolate + NADPH. The enzyme catalyses (6R)-5,10-methenyltetrahydrofolate + H2O = (6R)-10-formyltetrahydrofolate + H(+). Its pathway is one-carbon metabolism; tetrahydrofolate interconversion. Catalyzes the oxidation of 5,10-methylenetetrahydrofolate to 5,10-methenyltetrahydrofolate and then the hydrolysis of 5,10-methenyltetrahydrofolate to 10-formyltetrahydrofolate. This chain is Bifunctional protein FolD, found in Listeria monocytogenes serovar 1/2a (strain ATCC BAA-679 / EGD-e).